The primary structure comprises 493 residues: Poly(ribitol-phosphate) alpha-N-acetylglucosaminyltransferase (493 aa).

UDP-N-acetyl-alpha-D-glucosamine-binding positions include Gly17, Lys59, His249, Arg326, Lys331, Thr383, and 403–411 (EGQGLSMIE).

This sequence belongs to the glycosyltransferase group 1 family. Homotrimer.

The protein localises to the cytoplasm. It carries out the reaction 4-O-[(D-ribitylphospho)(n)-di{(2R)-glycerylphospho}]-N-acetyl-beta-D-mannosaminyl-(1-&gt;4)-N-acetyl-alpha-D-glucosaminyl di-trans,octa-cis-undecaprenyl diphosphate + n UDP-N-acetyl-alpha-D-glucosamine = 4-O-([2-N-acetyl-alpha-D-glucosaminyl-1-D-ribitylphospho](n)-di{[2R]-1-glycerylphospho})-N-acetyl-beta-D-mannosaminyl-(1-&gt;4)-N-acetyl-alpha-D-glucosaminyl di-trans,octa-cis-undecaprenyl diphosphate + n UDP + n H(+). It participates in cell wall biogenesis; poly(ribitol phosphate) teichoic acid biosynthesis. In terms of biological role, attaches N-acetyl-alpha-D-glucosamine residues to poly(RboP)-wall teichoic acids (WTAs). The polypeptide is Poly(ribitol-phosphate) alpha-N-acetylglucosaminyltransferase (Staphylococcus aureus (strain COL)).